The primary structure comprises 340 residues: MKKQKIAVLGPGSWGTALAQVLNDNGHEVRIWGNIPEQIDEINEKHTNTRYFKDVILDENIKAYKELSEALDSVNAILFVVPTKVTRLVAKQVAELLDHKVVVMHASKGLEPGTHERLSTILEEEIPSEMRSEIVVVSGPSHAEETIVRDITLITAASKDLETARYVQGIFSNSYFRLYTNSDVIGVETAGALKNIIAVGAGALHGMGYGDNAKAAIITRGLAEITRLGVKLGADPLTYSGLSGVGDLIVTGTSIHSRNWRAGYALGRGEKLEDIERNMGMVIEGISTTKVAYEIAQELGVYMPITTAIYKSIYEGADIKESILDMMSNELRSENEWDKK.

Serine 13, tryptophan 14, and lysine 108 together coordinate NADPH. Residues lysine 108, glycine 139, and serine 141 each contribute to the sn-glycerol 3-phosphate site. NADPH is bound at residue alanine 143. The sn-glycerol 3-phosphate site is built by lysine 194, aspartate 247, serine 257, arginine 258, and asparagine 259. Lysine 194 acts as the Proton acceptor in catalysis. Arginine 258 serves as a coordination point for NADPH. Valine 282 and glutamate 284 together coordinate NADPH.

Belongs to the NAD-dependent glycerol-3-phosphate dehydrogenase family.

The protein resides in the cytoplasm. It carries out the reaction sn-glycerol 3-phosphate + NAD(+) = dihydroxyacetone phosphate + NADH + H(+). The catalysed reaction is sn-glycerol 3-phosphate + NADP(+) = dihydroxyacetone phosphate + NADPH + H(+). It participates in membrane lipid metabolism; glycerophospholipid metabolism. Functionally, catalyzes the reduction of the glycolytic intermediate dihydroxyacetone phosphate (DHAP) to sn-glycerol 3-phosphate (G3P), the key precursor for phospholipid synthesis. This chain is Glycerol-3-phosphate dehydrogenase [NAD(P)+], found in Streptococcus thermophilus (strain ATCC BAA-491 / LMD-9).